We begin with the raw amino-acid sequence, 413 residues long: Arginine biosynthesis bifunctional protein ArgJ (413 aa).

Residues threonine 160, lysine 186, threonine 197, glutamate 277, asparagine 408, and threonine 413 each contribute to the substrate site. Threonine 197 functions as the Nucleophile in the catalytic mechanism.

The protein belongs to the ArgJ family. Heterotetramer of two alpha and two beta chains.

Its subcellular location is the cytoplasm. The catalysed reaction is N(2)-acetyl-L-ornithine + L-glutamate = N-acetyl-L-glutamate + L-ornithine. It catalyses the reaction L-glutamate + acetyl-CoA = N-acetyl-L-glutamate + CoA + H(+). Its pathway is amino-acid biosynthesis; L-arginine biosynthesis; L-ornithine and N-acetyl-L-glutamate from L-glutamate and N(2)-acetyl-L-ornithine (cyclic): step 1/1. It participates in amino-acid biosynthesis; L-arginine biosynthesis; N(2)-acetyl-L-ornithine from L-glutamate: step 1/4. Functionally, catalyzes two activities which are involved in the cyclic version of arginine biosynthesis: the synthesis of N-acetylglutamate from glutamate and acetyl-CoA as the acetyl donor, and of ornithine by transacetylation between N(2)-acetylornithine and glutamate. In Prochlorococcus marinus (strain SARG / CCMP1375 / SS120), this protein is Arginine biosynthesis bifunctional protein ArgJ.